A 336-amino-acid chain; its full sequence is Glyceraldehyde-3-phosphate dehydrogenase, chromosomal (336 aa).

NAD(+)-binding positions include Arg12 to Ile13, Asp37, Arg81, and Ser123. D-glyceraldehyde 3-phosphate contacts are provided by residues Ser154–Thr156 and Thr185. Cys155 acts as the Nucleophile in catalysis. Asn186 is a binding site for NAD(+). D-glyceraldehyde 3-phosphate contacts are provided by residues Arg200, Thr213 to Gly214, and Arg236. Asn317 contributes to the NAD(+) binding site.

This sequence belongs to the glyceraldehyde-3-phosphate dehydrogenase family. In terms of assembly, homotetramer.

The enzyme catalyses D-glyceraldehyde 3-phosphate + phosphate + NAD(+) = (2R)-3-phospho-glyceroyl phosphate + NADH + H(+). It participates in carbohydrate biosynthesis; Calvin cycle. Functionally, could be involved in carbon fixation as a component of the Calvin cycle. Catalyzes the oxidative phosphorylation of glyceraldehyde 3-phosphate (G3P) to 1,3-bisphosphoglycerate (BPG) using the cofactor NAD. The first reaction step involves the formation of a hemiacetal intermediate between G3P and a cysteine residue, and this hemiacetal intermediate is then oxidized to a thioester, with concomitant reduction of NAD to NADH. The reduced NADH is then exchanged with the second NAD, and the thioester is attacked by a nucleophilic inorganic phosphate to produce BPG. In Cupriavidus necator (strain ATCC 17699 / DSM 428 / KCTC 22496 / NCIMB 10442 / H16 / Stanier 337) (Ralstonia eutropha), this protein is Glyceraldehyde-3-phosphate dehydrogenase, chromosomal (cbbGC).